A 223-amino-acid polypeptide reads, in one-letter code: Flagellar L-ring protein (223 aa).

The N-terminal stretch at 1–18 (MKKSLMALIVVGSFLLSA) is a signal peptide. Residue cysteine 19 is the site of N-palmitoyl cysteine attachment. The S-diacylglycerol cysteine moiety is linked to residue cysteine 19.

It belongs to the FlgH family. In terms of assembly, the basal body constitutes a major portion of the flagellar organelle and consists of four rings (L,P,S, and M) mounted on a central rod.

It localises to the cell outer membrane. Its subcellular location is the bacterial flagellum basal body. Functionally, assembles around the rod to form the L-ring and probably protects the motor/basal body from shearing forces during rotation. In Herminiimonas arsenicoxydans, this protein is Flagellar L-ring protein.